A 491-amino-acid polypeptide reads, in one-letter code: Cobyric acid synthase (491 aa).

In terms of domain architecture, GATase cobBQ-type spans 258–445 (ALKVAVPVLG…MHGLFGADAF (188 aa)). C340 functions as the Nucleophile in the catalytic mechanism. H437 is a catalytic residue.

It belongs to the CobB/CobQ family. CobQ subfamily.

It participates in cofactor biosynthesis; adenosylcobalamin biosynthesis. Its function is as follows. Catalyzes amidations at positions B, D, E, and G on adenosylcobyrinic A,C-diamide. NH(2) groups are provided by glutamine, and one molecule of ATP is hydrogenolyzed for each amidation. In Mesorhizobium japonicum (strain LMG 29417 / CECT 9101 / MAFF 303099) (Mesorhizobium loti (strain MAFF 303099)), this protein is Cobyric acid synthase.